Reading from the N-terminus, the 173-residue chain is ATP-dependent protease subunit HslV (173 aa).

Threonine 2 is a catalytic residue. Glycine 158, aspartate 161, and serine 164 together coordinate Na(+).

The protein belongs to the peptidase T1B family. HslV subfamily. As to quaternary structure, a double ring-shaped homohexamer of HslV is capped on each side by a ring-shaped HslU homohexamer. The assembly of the HslU/HslV complex is dependent on binding of ATP.

The protein localises to the cytoplasm. The enzyme catalyses ATP-dependent cleavage of peptide bonds with broad specificity.. Allosterically activated by HslU binding. Functionally, protease subunit of a proteasome-like degradation complex believed to be a general protein degrading machinery. The protein is ATP-dependent protease subunit HslV of Mannheimia haemolytica (Pasteurella haemolytica).